A 297-amino-acid polypeptide reads, in one-letter code: Mitochondrial thiamine pyrophosphate carrier 1 (297 aa).

Solcar repeat units lie at residues 13-94 (SHVF…TNAA), 102-195 (PPTI…IRAR), and 196-295 (WPET…LMRV). 6 helical membrane-spanning segments follow: residues 19 to 36 (LVSG…IAPL), 75 to 91 (IMYI…YSYT), 109 to 128 (LAGA…FDVL), 163 to 187 (GLGG…AMFG), 203 to 219 (TAGA…TFPL), and 270 to 287 (GIGL…INLW).

It belongs to the mitochondrial carrier (TC 2.A.29) family.

Its subcellular location is the mitochondrion inner membrane. Mitochondrial transporter that mediates uptake of thiamine pyrophosphate (ThPP) into mitochondria. The sequence is that of Mitochondrial thiamine pyrophosphate carrier 1 (TPC1) from Vanderwaltozyma polyspora (strain ATCC 22028 / DSM 70294 / BCRC 21397 / CBS 2163 / NBRC 10782 / NRRL Y-8283 / UCD 57-17) (Kluyveromyces polysporus).